The following is a 667-amino-acid chain: DNA ligase (667 aa).

Residues 30–34 (DSEYD), 79–80 (SL), and glutamate 112 each bind NAD(+). The active-site N6-AMP-lysine intermediate is lysine 114. The NAD(+) site is built by arginine 135, glutamate 172, lysine 289, and lysine 313. Residues cysteine 407, cysteine 410, cysteine 425, and cysteine 431 each coordinate Zn(2+). A BRCT domain is found at 590–667 (VRDNPLKGKT…SENEFLALLA (78 aa)).

This sequence belongs to the NAD-dependent DNA ligase family. LigA subfamily. Mg(2+) is required as a cofactor. Mn(2+) serves as cofactor.

It catalyses the reaction NAD(+) + (deoxyribonucleotide)n-3'-hydroxyl + 5'-phospho-(deoxyribonucleotide)m = (deoxyribonucleotide)n+m + AMP + beta-nicotinamide D-nucleotide.. DNA ligase that catalyzes the formation of phosphodiester linkages between 5'-phosphoryl and 3'-hydroxyl groups in double-stranded DNA using NAD as a coenzyme and as the energy source for the reaction. It is essential for DNA replication and repair of damaged DNA. This is DNA ligase from Histophilus somni (strain 2336) (Haemophilus somnus).